The chain runs to 152 residues: Non-specific lipid transfer protein GPI-anchored 8 (152 aa).

A signal peptide spans 1 to 23 (MNITRILGVVTTVVILYSVQVTA). Intrachain disulfides connect Cys42–Cys56, Cys57–Cys98, and Cys70–Cys107. Asn108 is a glycosylation site (N-linked (GlcNAc...) asparagine). Ser124 carries GPI-anchor amidated serine lipidation. Residues 125–152 (GNSFSTKKNTALAITFFGFSFVFLGMII) constitute a propeptide, removed in mature form.

This sequence belongs to the plant LTP family.

It localises to the cell membrane. Probable lipid transfer protein. This Arabidopsis thaliana (Mouse-ear cress) protein is Non-specific lipid transfer protein GPI-anchored 8.